A 316-amino-acid chain; its full sequence is DNA-directed RNA polymerase III subunit RPC6 (316 aa).

Position 2 is an N-acetylalanine (alanine 2). Glycyl lysine isopeptide (Lys-Gly) (interchain with G-Cter in SUMO2) cross-links involve residues lysine 5 and lysine 7. Residues cysteine 287, cysteine 290, cysteine 296, and cysteine 307 each coordinate [4Fe-4S] cluster.

The protein belongs to the eukaryotic RPC34/RPC39 RNA polymerase subunit family. In terms of assembly, component of the RNA polymerase III complex consisting of 17 subunits: a ten-subunit horseshoe-shaped catalytic core composed of POLR3A/RPC1, POLR3B/RPC2, POLR1C/RPAC1, POLR1D/RPAC2, POLR3K/RPC10, POLR2E/RPABC1, POLR2F/RPABC2, POLR2H/RPABC3, POLR2K/RPABC4 and POLR2L/RPABC5; a mobile stalk composed of two subunits POLR3H/RPC8 and CRCP/RPC9, protruding from the core and functioning primarily in transcription initiation; and additional subunits homologous to general transcription factors of the RNA polymerase II machinery, POLR3C/RPC3-POLR3F/RPC6-POLR3G/RPC7 heterotrimer required for transcription initiation and POLR3D/RPC4-POLR3E/RPC5 heterodimer involved in both transcription initiation and termination. Directly interacts with POLR3C. Interacts with TBP and TFIIIB90 and GTF3C4. Interacts with MAF1. As part of the RNA polymerase III complex, interacts with PKP2.

The protein localises to the nucleus. Its function is as follows. DNA-dependent RNA polymerase catalyzes the transcription of DNA into RNA using the four ribonucleoside triphosphates as substrates. Specific peripheric component of RNA polymerase III (Pol III) which synthesizes small non-coding RNAs including 5S rRNA, snRNAs, tRNAs and miRNAs from at least 500 distinct genomic loci. Part of POLR3C/RPC3-POLR3F/RPC6-POLR3G/RPC7 heterotrimer that coordinates the dynamics of Pol III stalk and clamp modules during the transition from apo to elongation state. Pol III plays a key role in sensing and limiting infection by intracellular bacteria and DNA viruses, including varicella zoster virus. Acts as a nuclear and cytosolic DNA sensor detecting AT-rich DNA, involved in innate immune response. Can sense non-self dsDNA that serves as template for transcription into dsRNA. The non-self RNA polymerase III transcripts, such as Epstein-Barr virus-encoded RNAs (EBERs) induce type I interferon and NF-kappa-B through the RIG-I pathway. Preferentially binds double-stranded DNA (dsDNA). The protein is DNA-directed RNA polymerase III subunit RPC6 of Homo sapiens (Human).